We begin with the raw amino-acid sequence, 1318 residues long: MLRTSGLALLALVSAVGPSQASGFTEKGLSLLGYQLCSHRVTHTVQKVEAVQTSYTSYVSCGGWIPWRRCPKMVYRTQYLVVEVPESRNVTDCCEGYEQLGLYCVLPLNQSGQFTSRPGACPAEGPEPSTSPCSLDIDCPGLEKCCPWSGGRYCMAPAPQAPERDPVGSWYNVTILVKMDFKELQQVDPRLLNHMRLLHSLVTSALQPMASTVHHLHSAPGNASTTVSRLLLGLPRPLPVADVSTLLGDIAKRVYEVISVQVQDVNECFYEELNACSGRELCANLEGSYWCVCHQEAPATSPRKLNLEWEDCPPVSDYVVLNVTSDSFQVSWRLNSTQNHTFHVRVYRGMELLRSARTQSQALAVAGLEAGVLYRVKTSYQGCGADVSTTLTIKTNAQVFEVTIKIVNHNLTEKLLNRSSVEYQDFSRQLLHEVESSFPPVVSDLYRSGKLRMQIVSLQAGSVVVRLKLTVQDPGFPMGISTLAPILQPLLASTVFQIDRQGTRVQDWDECVDSAEHDCSPAAWCINLEGSYTCQCRTTRDATPSRAGRACEGDLVSPMGGGLSAATGVTVPGLGTGTAALGLENFTLSPSPGYPQGTPAAGQAWTPEPSPRRGGSNVVGYDRNNTGKGVEQELQGNSIMEPPSWPSPTEDPTGHFLWHATRSTRETLLNPTWLRNEDSGPSGSVDLPLTSTLTALKTPACVPVSIGRIMVSNVTSTGFHLAWEADLAMDSTFQLTLTSMWSPAVVLETWNTSVTLSGLEPGVLHLVEIMAKACGKEGARAHLKVRTAARKLIGKVRIKNVRYSESFRNASSQEYRDFLELFFRMVRGSLPATMCQHMDAGGVRMEVVSVTNGSIVVEFHLLIIADVDVQEVSAAFLTAFQTVPLLEVIRGDTFIQDYDECERKEDDCVPGTSCRNTLGSFTCSCEGGAPDFPVEYSERPCEGDSPGNETWATSPERPLTTAGTKAAFVQGTSPTPQGLPQRLNLTGAVRVLCEIEKVVVAIQKRFLQQESIPESSLYLSHPSCNVSHSNGTHVLLEAGWSECGTLMQSNMTNTVVRTTLRNDLSQEGIIHHLKILSPIYCAFQNDLLTSSGFTLEWGVYTIIEDLHGAGNFVTEMQLFIGDSPIPQNYSVSASDDVRIEVGLYRQKSNLKVVLTECWATPSSNARDPITFSFINNSCPVPNTYTNVIENGNSNKAQFKLRIFSFINDSIVYLHCKLRVCMESPGATCKINCNNFRLLQNSETSATHQMSWGPLIRSEGEPPHAEAGLGAGYVVLIVVAIFVLVAGTATLLIVRYQRMNGRYNFKIQSNNFSYQVFYE.

Positions 1–21 (MLRTSGLALLALVSAVGPSQA) are cleaved as a signal peptide. Residues 22–1272 (SGFTEKGLSL…HAEAGLGAGY (1251 aa)) lie on the Extracellular side of the membrane. Residues 33–106 (GYQLCSHRVT…YEQLGLYCVL (74 aa)) enclose the EMI domain. Intrachain disulfides connect C37-C94, C61-C70, and C93-C104. N-linked (GlcNAc...) asparagine glycosylation is present at N89. N109 carries an N-linked (GlcNAc...) asparagine glycan. A WAP domain is found at 114–158 (FTSRPGACPAEGPEPSTSPCSLDIDCPGLEKCCPWSGGRYCMAPA). N-linked (GlcNAc...) asparagine glycosylation occurs at N172. One can recognise an EGF-like 1; calcium-binding domain in the interval 264–313 (DVNECFYEELNACSGRELCANLEGSYWCVCHQEAPATSPRKLNLEWEDCP). The 85-residue stretch at 314–398 (PVSDYVVLNV…TTLTIKTNAQ (85 aa)) folds into the Fibronectin type-III 1 domain. Residues N322, N335, and N417 are each glycosylated (N-linked (GlcNAc...) asparagine). Residues 396 to 510 (NAQVFEVTIK…QGTRVQDWDE (115 aa)) form the SEA 1 domain. The 46-residue stretch at 507–552 (DWDECVDSAEHDCSPAAWCINLEGSYTCQCRTTRDATPSRAGRACE) folds into the EGF-like 2; calcium-binding domain. Disulfide bonds link C511/C525, C519/C534, and C536/C551. Residue N585 is glycosylated (N-linked (GlcNAc...) asparagine). The interval 593-655 (GYPQGTPAAG…PSPTEDPTGH (63 aa)) is disordered. Residues 702-791 (VPVSIGRIMV…HLKVRTAARK (90 aa)) form the Fibronectin type-III 2 domain. An N-linked (GlcNAc...) asparagine glycan is attached at N713. The SEA 2 domain occupies 788–900 (AARKLIGKVR…GDTFIQDYDE (113 aa)). Positions 897-938 (DYDECERKEDDCVPGTSCRNTLGSFTCSCEGGAPDFPVEYSE) constitute an EGF-like 3; calcium-binding domain. Intrachain disulfides connect C901–C914 and C908–C923. Positions 938 to 957 (ERPCEGDSPGNETWATSPER) are disordered. Residues N984 and N1050 are each glycosylated (N-linked (GlcNAc...) asparagine). Positions 992–1235 (LCEIEKVVVA…ATCKINCNNF (244 aa)) constitute a ZP domain. A disulfide bridge connects residues C1157 and C1215. The chain crosses the membrane as a helical span at residues 1273 to 1293 (VVLIVVAIFVLVAGTATLLIV). At 1294 to 1318 (RYQRMNGRYNFKIQSNNFSYQVFYE) the chain is on the cytoplasmic side.

As to expression, isoform 4 is expressed at low level in kidney, testis and fetal thymus. Isoform 3 is expressed at low level in prostate, testis and fetal thymus.

Its subcellular location is the cell membrane. The protein resides in the cytoplasm. The chain is Uromodulin-like 1 (UMODL1) from Homo sapiens (Human).